The sequence spans 995 residues: uncharacterized protein (995 aa).

The first 30 residues, 1-30 (MFIHRMKSNLASLFLSFFLLLACEFTFSYA), serve as a signal peptide directing secretion. Residues asparagine 115, asparagine 162, asparagine 225, asparagine 422, asparagine 478, and asparagine 486 are each glycosylated (N-linked (GlcNAc...) asparagine). Glutamate 502 is a catalytic residue. N-linked (GlcNAc...) asparagine glycosylation is found at asparagine 546 and asparagine 611. The active-site Proton donor is aspartate 669. N-linked (GlcNAc...) asparagine glycosylation is found at asparagine 670, asparagine 823, asparagine 843, and asparagine 986.

The protein belongs to the glycosyl hydrolase 31 family.

It is found in the spore wall. This is an uncharacterized protein from Schizosaccharomyces pombe (strain 972 / ATCC 24843) (Fission yeast).